We begin with the raw amino-acid sequence, 174 residues long: FMN reductase (NADH) RutF (174 aa).

The protein belongs to the non-flavoprotein flavin reductase family. RutF subfamily.

The enzyme catalyses FMNH2 + NAD(+) = FMN + NADH + 2 H(+). Its function is as follows. Catalyzes the reduction of FMN to FMNH2 which is used to reduce pyrimidine by RutA via the Rut pathway. This chain is FMN reductase (NADH) RutF, found in Stutzerimonas stutzeri (strain A1501) (Pseudomonas stutzeri).